We begin with the raw amino-acid sequence, 341 residues long: Cell wall mannoprotein PIR1 (341 aa).

The N-terminal stretch at 1–18 (MQYKKSLVASALVTTSLA) is a signal peptide. Positions 19–63 (AYAPKDPWSTLTPSATYKGGITDYSSTFGIAVEPIATTASSKAKR) are excised as a propeptide. 8 PIR1/2/3 repeats span residues 64–82 (AAAISQIGDGQIQATTKTT), 83–101 (AAAVSQIGDGQIQATTKTK), 102–120 (AAAVSQIGDGQIQATTKTT), 126–144 (AAAVSQIGDGQIQATTKTK), 145–163 (AAAVSQIGDGQIQATTKTT), 164–182 (AAAVSQIGDGQIQATTKTT), 183–201 (AAAVSQIGDGQIQATTNTT), and 202–220 (VAPVSQITDGQIQATTLTS).

Belongs to the PIR protein family. Covalently linked to beta-1,3-glucan of the inner cell wall layer via an alkali-sensitive ester linkage between the gamma-carboxyl group of glutamic acids, arising from specific glutamines within the PIR1/2/3 repeats, and hydroxyl groups of glucoses of beta-1,3-glucan chains. In terms of processing, O-glycosylated. Extensively O-mannosylated.

It is found in the secreted. Its subcellular location is the cell wall. In terms of biological role, component of the outer cell wall layer. Required for stability of the cell wall and for optimal growth. Required for resistance against several antifungal and cell wall-perturbing agents and for tolerance to heat shock. The protein is Cell wall mannoprotein PIR1 (PIR1) of Saccharomyces cerevisiae (strain RM11-1a) (Baker's yeast).